We begin with the raw amino-acid sequence, 354 residues long: MFKIASSPHSHSGKLTARIMLWVILAMLPAIFAQLYYFGFGVLFQITIAVVFALCLEFLVTILRKKPKLFYISDFSVTLTALILAVAIPPYAPYWIILIGIFCAVILGKHVYGGLGQNPFNPAMVGYVVLLVSFPMQMTTWLAPVQLLHEPPTFIDAYHLIFSGGTTDGFSLHQLTASIDGMSSATPLDAVKTGLKANRGLAEINRSPLFTQSSLAGLGWFQVNLAFLLGGLFLVWKRIIHWQIPTALLITVCLFSLCSWLFSDNMPSPLWQLFSGATMFCAFFIATDPVTASITPKGKLVFGVLVGLLLCLIRFYGGYPDGAAFAILLANICVPLIDQYTRPRVTGYDLRGKN.

5 helical membrane-spanning segments follow: residues 19–39 (IMLW…YYFG), 40–60 (FGVL…EFLV), 70–89 (FYIS…VAIP), 94–116 (YWII…GGLG), and 123–143 (AMVG…TWLA). At threonine 186 the chain carries FMN phosphoryl threonine. 5 helical membrane-spanning segments follow: residues 215-235 (LAGL…LFLV), 242-262 (WQIP…SWLF), 266-286 (MPSP…FFIA), 300-320 (LVFG…GGYP), and 321-341 (DGAA…DQYT).

Belongs to the NqrB/RnfD family. The complex is composed of six subunits: RnfA, RnfB, RnfC, RnfD, RnfE and RnfG. FMN serves as cofactor.

The protein localises to the cell inner membrane. Part of a membrane-bound complex that couples electron transfer with translocation of ions across the membrane. The chain is Ion-translocating oxidoreductase complex subunit D from Mannheimia succiniciproducens (strain KCTC 0769BP / MBEL55E).